The sequence spans 122 residues: Large ribosomal subunit protein uL14c (122 aa).

It belongs to the universal ribosomal protein uL14 family. Part of the 50S ribosomal subunit.

It localises to the plastid. It is found in the chloroplast. Functionally, binds to 23S rRNA. The sequence is that of Large ribosomal subunit protein uL14c from Capsella bursa-pastoris (Shepherd's purse).